The sequence spans 404 residues: uncharacterized protein (404 aa).

Residues 1–22 show a composition bias toward polar residues; sequence MASSINNSSQPTVPSISNNSHG. Residues 1 to 110 form a disordered region; the sequence is MASSINNSSQ…QQTPVKRRRR (110 aa). Residue T47 is modified to Phosphothreonine. The segment covering 87–104 has biased composition (polar residues); sequence SRGSSLKSHLETESQQTP. Residues 117-166 form a PHD-type zinc finger; that stretch reads VDYCSACGGRGLFICCEGCPCSFHLSCLEPPLTPENIPEGSWFCVTCSIK.

This is an uncharacterized protein from Schizosaccharomyces pombe (strain 972 / ATCC 24843) (Fission yeast).